The sequence spans 130 residues: MAKPAEKKTKKKIKRVITDGVAHVHASFNNTIVTITDRQGNALSWATSGGAGFRGSRKSTPFAAQVAAEKAGRAALDYGVKSLEVRIKGPGPGRESAVRSLNNVGYKITNIIDVTPIPHNGCRPPKKRRV.

This sequence belongs to the universal ribosomal protein uS11 family. In terms of assembly, part of the 30S ribosomal subunit. Interacts with proteins S7 and S18. Binds to IF-3.

Located on the platform of the 30S subunit, it bridges several disparate RNA helices of the 16S rRNA. Forms part of the Shine-Dalgarno cleft in the 70S ribosome. The polypeptide is Small ribosomal subunit protein uS11 (Xanthomonas campestris pv. campestris (strain B100)).